The sequence spans 191 residues: Lipoprotein signal peptidase (191 aa).

Transmembrane regions (helical) follow at residues 26-46 (VWFP…LKAW), 84-104 (AVPL…YLLW), and 110-130 (FLTV…IDGL). Catalysis depends on residues Asp-137 and Asp-163. The chain crosses the membrane as a helical span at residues 156-176 (FPIFNIADMCVVGGTILLLVA).

The protein belongs to the peptidase A8 family.

Its subcellular location is the cell membrane. It catalyses the reaction Release of signal peptides from bacterial membrane prolipoproteins. Hydrolyzes -Xaa-Yaa-Zaa-|-(S,diacylglyceryl)Cys-, in which Xaa is hydrophobic (preferably Leu), and Yaa (Ala or Ser) and Zaa (Gly or Ala) have small, neutral side chains.. It participates in protein modification; lipoprotein biosynthesis (signal peptide cleavage). In terms of biological role, this protein specifically catalyzes the removal of signal peptides from prolipoproteins. This chain is Lipoprotein signal peptidase, found in Deinococcus radiodurans (strain ATCC 13939 / DSM 20539 / JCM 16871 / CCUG 27074 / LMG 4051 / NBRC 15346 / NCIMB 9279 / VKM B-1422 / R1).